Reading from the N-terminus, the 201-residue chain is RILP-like protein 2 (201 aa).

An RH1 domain is found at 14–108 (SPEMALDKDP…LRDGPQMGVG (95 aa)). A coiled-coil region spans residues 67 to 155 (LEMLEALVNQ…AQDELQCYKS (89 aa)). Residues 121-197 (RPRFTLQELR…TVKSLFSFKQ (77 aa)) enclose the RH2 domain. The disordered stretch occupies residues 175–201 (TSSPRSNASKEKSTVKSLFSFKQGKNT).

The protein belongs to the RILPL family.

It localises to the cytoplasm. Its subcellular location is the cytosol. It is found in the cytoskeleton. The protein resides in the microtubule organizing center. The protein localises to the centrosome. It localises to the cell projection. Its subcellular location is the cilium. Its function is as follows. Involved in cell shape and neuronal morphogenesis, positively regulating the establishment and maintenance of dendritic spines. Plays a role in cellular protein transport. The polypeptide is RILP-like protein 2 (rilpl2) (Xenopus laevis (African clawed frog)).